A 33-amino-acid chain; its full sequence is RWKVFKKIEKMGRNIRDGVIKAAPAIEVLGQAK.

K21 bears the 5-hydroxylysine mark.

Monomer. Hemolymph.

Its subcellular location is the secreted. In terms of biological role, cecropins have lytic and antibacterial activity against several Gram-positive and Gram-negative bacteria. Also has activity against fungi. This is Cecropin-C from Heliothis virescens (Tobacco budworm moth).